The chain runs to 181 residues: Large ribosomal subunit protein uL5 (181 aa).

It belongs to the universal ribosomal protein uL5 family. As to quaternary structure, part of the 50S ribosomal subunit; part of the 5S rRNA/L5/L18/L25 subcomplex. Contacts the 5S rRNA and the P site tRNA. Forms a bridge to the 30S subunit in the 70S ribosome.

This is one of the proteins that bind and probably mediate the attachment of the 5S RNA into the large ribosomal subunit, where it forms part of the central protuberance. In the 70S ribosome it contacts protein S13 of the 30S subunit (bridge B1b), connecting the 2 subunits; this bridge is implicated in subunit movement. Contacts the P site tRNA; the 5S rRNA and some of its associated proteins might help stabilize positioning of ribosome-bound tRNAs. This is Large ribosomal subunit protein uL5 from Trichodesmium erythraeum (strain IMS101).